The primary structure comprises 472 residues: 7-dimethylallyltryptophan synthase hasE (472 aa).

Position 138 (glutamate 138) interacts with L-tryptophan. 8 residues coordinate dimethylallyl diphosphate: arginine 154, lysine 239, tyrosine 241, lysine 313, tyrosine 315, tyrosine 393, tyrosine 460, and tyrosine 464.

The protein belongs to the tryptophan dimethylallyltransferase family. Homodimer.

The enzyme catalyses L-tryptophan + dimethylallyl diphosphate = 7-(3-methylbut-2-enyl)-L-tryptophan + diphosphate. It carries out the reaction an N-terminal L-tryptophanyl-L-alpha-aminoacyl-[peptide] + H2O = an N-terminal L-alpha-aminoacyl-[peptide] + L-tryptophan. Its pathway is secondary metabolite biosynthesis. Functionally, 7-dimethylallyltryptophan synthase; part of the gene cluster that mediates the biosynthesis of hexadehydro-astechrome (HAS), a tryptophan-derived iron(III)-complex that acts as a virulence factor in infected mice. Catalyzes the prenylation of L-tryptophan at the C-7 position of the indole moiety. The enzyme is specific for dimethylallyl diphosphate (DMAPP) as prenyl donor. Also accepts D-tryptophan, typtophan-derivatives with modifications at the side chain or the indole ring, and linear and cyclic dipeptides such as H-L-Trp-L-Gly-OH or cyclo-L-Trp-L-Gly as substrates, however with lower efficiency. Also has tryptophan aminopeptidase activity towards linear peptides with a tryptophanyl moiety at the N-terminus. Dipeptides are better substrates than peptides with 3 or more amino acids. Enzymatic rate constants however are much higher for the prenyltransferase activity than for the aminopeptidase activity. Within the hexadehydro-astechrome biosyntetic pathway, hasE catalyzes the prenylation of the hasD-tethered tryptophan or the resulting tethered Trp-Ala dipeptid. The HAS biosynthesis begins with the synthesis of a tethered Trp-Ala dipeptide by the NRPS hasD. The 7-dimethylallyltryptophan synthase hasE then catalyzes the prenylation of the hasD-tethered tryptophan or the resulting tethered Trp-Ala dipeptide at the C-7 position of the indole moiety. HAS biosynthesis continues via tethered intermediates with the succesive actions of the cytochrome P450 monooxygenase hasH, the O-methyltransferase hasC, and the FAD-linked oxidoreductase hasG. The resulting O-methylated diketopiperazine is then released from hasD. Finally, three O-methylated diketopiperazine molecules assemble in a trimeric complex with Fe(III) to produce hexadehydro-astechrome. The polypeptide is 7-dimethylallyltryptophan synthase hasE (Aspergillus fumigatus (strain CBS 144.89 / FGSC A1163 / CEA10) (Neosartorya fumigata)).